A 915-amino-acid chain; its full sequence is Protein MEI2-like 1 (915 aa).

The disordered stretch occupies residues 1 to 90; it reads MPSDIMEQRG…NTTNGSQWES (90 aa). The span at 16–25 shows a compositional bias: basic and acidic residues; that stretch reads HFHEDIHITS. Residues 50–65 show a composition bias toward polar residues; that stretch reads MPKSSWTSESYQLKPQ. A compositionally biased stretch (low complexity) spans 66-77; it reads SSFSGSHPSGSP. A Phosphoserine modification is found at Ser76. Polar residues predominate over residues 78–89; the sequence is NARNTTNGSQWE. RRM domains are found at residues 217–290 and 302–375; these read RTLL…YSIS and GALL…PTYP. Disordered stretches follow at residues 690–723 and 854–915; these read PGRS…SSSN and LFHT…LKEN. Residues 705 to 723 are compositionally biased toward basic and acidic residues; the sequence is PNERYRNLSHRRSESSSSN. Polar residues predominate over residues 882–898; it reads RSSSIDNYNSFSISSVS.

As to expression, expressed in roots, shoots, leaves, flowers and siliques.

Probable RNA-binding transcriptional activator that plays a role in meiosis and vegetative growth. May be a downstream effector of TOR signaling pathway and recruited by RAPTOR1 for TOR substrate. This chain is Protein MEI2-like 1 (ML1), found in Arabidopsis thaliana (Mouse-ear cress).